A 408-amino-acid chain; its full sequence is CinA-like protein (408 aa).

It belongs to the CinA family.

This chain is CinA-like protein, found in Thermotoga sp. (strain RQ2).